The sequence spans 349 residues: Core protein VP7 (349 aa).

Asparagine 45 carries N-linked (GlcNAc...) asparagine; by host glycosylation.

The protein belongs to the orbivirus VP7 family. Homotrimer.

The protein resides in the virion. Major structural core protein; binds to structural protein VP3. Constitutes the surface of the AHSV core. In Camelus dromedarius (Dromedary), this protein is Core protein VP7 (Segment-7).